A 126-amino-acid chain; its full sequence is Ribosome-binding factor A (126 aa).

This sequence belongs to the RbfA family. In terms of assembly, monomer. Binds 30S ribosomal subunits, but not 50S ribosomal subunits or 70S ribosomes.

It localises to the cytoplasm. Its function is as follows. One of several proteins that assist in the late maturation steps of the functional core of the 30S ribosomal subunit. Associates with free 30S ribosomal subunits (but not with 30S subunits that are part of 70S ribosomes or polysomes). Required for efficient processing of 16S rRNA. May interact with the 5'-terminal helix region of 16S rRNA. The sequence is that of Ribosome-binding factor A from Treponema pallidum (strain Nichols).